We begin with the raw amino-acid sequence, 262 residues long: Acyl-[acyl-carrier-protein]--UDP-N-acetylglucosamine O-acyltransferase (262 aa).

This sequence belongs to the transferase hexapeptide repeat family. LpxA subfamily. In terms of assembly, homotrimer.

It is found in the cytoplasm. It carries out the reaction a (3R)-hydroxyacyl-[ACP] + UDP-N-acetyl-alpha-D-glucosamine = a UDP-3-O-[(3R)-3-hydroxyacyl]-N-acetyl-alpha-D-glucosamine + holo-[ACP]. It functions in the pathway glycolipid biosynthesis; lipid IV(A) biosynthesis; lipid IV(A) from (3R)-3-hydroxytetradecanoyl-[acyl-carrier-protein] and UDP-N-acetyl-alpha-D-glucosamine: step 1/6. Its function is as follows. Involved in the biosynthesis of lipid A, a phosphorylated glycolipid that anchors the lipopolysaccharide to the outer membrane of the cell. The polypeptide is Acyl-[acyl-carrier-protein]--UDP-N-acetylglucosamine O-acyltransferase (Burkholderia vietnamiensis (strain G4 / LMG 22486) (Burkholderia cepacia (strain R1808))).